Consider the following 73-residue polypeptide: Defensin-like protein 34 (73 aa).

Residues 1–25 (MASNKVSFFLVLCLCVLSTAEFGEA) form the signal peptide. 3 cysteine pairs are disulfide-bonded: Cys-33/Cys-59, Cys-45/Cys-68, and Cys-49/Cys-70.

Belongs to the DEFL family.

It localises to the secreted. In Arabidopsis thaliana (Mouse-ear cress), this protein is Defensin-like protein 34.